The following is a 557-amino-acid chain: Prosaposin (557 aa).

The signal sequence occupies residues Met1–Thr16. Positions Ser17–Lys59 are excised as a propeptide. Residues Pro18–Ala58 enclose the Saposin A-type 1 domain. 4 Saposin B-type domains span residues Lys59–Gln142, Asn193–Lys277, Asn313–Pro394, and Asn438–Tyr519. 3 disulfides stabilise this stretch: Cys63-Cys138, Cys66-Cys132, and Cys94-Cys106. Asn80 carries N-linked (GlcNAc...) asparagine glycosylation. Residues Glu143–Asn193 constitute a propeptide that is removed on maturation. 3 cysteine pairs are disulfide-bonded: Cys197–Cys273, Cys200–Cys267, and Cys229–Cys240. Residue Asn214 is glycosylated (N-linked (GlcNAc...) asparagine). Positions Lys277–His312 are excised as a propeptide. 3 cysteine pairs are disulfide-bonded: Cys317–Cys390, Cys320–Cys384, and Cys348–Cys359. Asn334 carries N-linked (GlcNAc...) asparagine glycosylation. Residues Arg393 to Lys437 constitute a propeptide that is removed on maturation. 3 disulfide bridges follow: Cys442-Cys515, Cys445-Cys509, and Cys473-Cys484. Asn459 carries an N-linked (GlcNAc...) asparagine glycan. Residues Lys520–Asn557 constitute a propeptide that is removed on maturation. The Saposin A-type 2 domain occupies Leu521 to Asn557.

As to quaternary structure, saposin-B is a homodimer. Prosaposin exists as a roughly half-half mixture of monomers and disulfide-linked dimers. Monomeric prosaposin interacts (via C-terminus) with sortilin/SORT1, the interaction is required for targeting to lysosomes. Interacts with GRN; facilitates lysosomal delivery of progranulin from the extracellular space and the biosynthetic pathway.

The protein localises to the secreted. It localises to the lysosome. In terms of biological role, behaves as a myelinotrophic and neurotrophic factor, these effects are mediated by its G-protein-coupled receptors, GPR37 and GPR37L1, undergoing ligand-mediated internalization followed by ERK phosphorylation signaling. Saposin-A and saposin-C stimulate the hydrolysis of glucosylceramide by beta-glucosylceramidase (EC 3.2.1.45) and galactosylceramide by beta-galactosylceramidase (EC 3.2.1.46). Saposin-C apparently acts by combining with the enzyme and acidic lipid to form an activated complex, rather than by solubilizing the substrate. Functionally, saposin-B stimulates the hydrolysis of galacto-cerebroside sulfate by arylsulfatase A (EC 3.1.6.8), GM1 gangliosides by beta-galactosidase (EC 3.2.1.23) and globotriaosylceramide by alpha-galactosidase A (EC 3.2.1.22). Saposin-B forms a solubilizing complex with the substrates of the sphingolipid hydrolases. Its function is as follows. Saposin-D is a specific sphingomyelin phosphodiesterase activator (EC 3.1.4.12). In terms of biological role, saposins are specific low-molecular mass non-enzymatic proteins, they participate in the lysosomal degradation of sphingolipids, which takes place by the sequential action of specific hydrolases. This Mus musculus (Mouse) protein is Prosaposin (Psap).